The sequence spans 435 residues: Trigger factor (435 aa).

The 86-residue stretch at 164–249 folds into the PPIase FKBP-type domain; it reads GDFAKFDFEG…LHEIQGKKAG (86 aa).

This sequence belongs to the FKBP-type PPIase family. Tig subfamily.

It localises to the cytoplasm. The catalysed reaction is [protein]-peptidylproline (omega=180) = [protein]-peptidylproline (omega=0). Its function is as follows. Involved in protein export. Acts as a chaperone by maintaining the newly synthesized protein in an open conformation. Functions as a peptidyl-prolyl cis-trans isomerase. The protein is Trigger factor of Campylobacter fetus subsp. fetus (strain 82-40).